We begin with the raw amino-acid sequence, 72 residues long: Small ribosomal subunit protein bS18 (72 aa).

It belongs to the bacterial ribosomal protein bS18 family. In terms of assembly, part of the 30S ribosomal subunit. Forms a tight heterodimer with protein bS6.

In terms of biological role, binds as a heterodimer with protein bS6 to the central domain of the 16S rRNA, where it helps stabilize the platform of the 30S subunit. This Francisella philomiragia subsp. philomiragia (strain ATCC 25017 / CCUG 19701 / FSC 153 / O#319-036) protein is Small ribosomal subunit protein bS18.